The following is a 173-amino-acid chain: Probable xanthine dehydrogenase subunit E (173 aa).

The 2Fe-2S ferredoxin-type domain maps to 14–90; that stretch reads EQFRMTVNGQ…GHSITTIEGL (77 aa). [2Fe-2S] cluster-binding residues include Cys-52, Cys-57, Cys-60, Cys-72, Cys-110, Cys-113, Cys-145, and Cys-147.

As to quaternary structure, could be composed of four subunits: PucA, PucC, PucD and PucE. The cofactor is [2Fe-2S] cluster.

The catalysed reaction is xanthine + NAD(+) + H2O = urate + NADH + H(+). The enzyme catalyses hypoxanthine + NAD(+) + H2O = xanthine + NADH + H(+). Its pathway is purine metabolism; hypoxanthine degradation; urate from hypoxanthine: step 1/2. It participates in purine metabolism; hypoxanthine degradation; urate from hypoxanthine: step 2/2. Functionally, oxidizes hypoxanthine and xanthine to uric acid. The chain is Probable xanthine dehydrogenase subunit E (pucE) from Bacillus subtilis (strain 168).